Reading from the N-terminus, the 211-residue chain is Thiamine-phosphate synthase (211 aa).

4-amino-2-methyl-5-(diphosphooxymethyl)pyrimidine is bound by residues glutamine 39–lysine 43 and asparagine 71. Residues aspartate 72 and aspartate 91 each contribute to the Mg(2+) site. Serine 110 is a 4-amino-2-methyl-5-(diphosphooxymethyl)pyrimidine binding site. Threonine 136 to threonine 138 is a 2-[(2R,5Z)-2-carboxy-4-methylthiazol-5(2H)-ylidene]ethyl phosphate binding site. Lysine 139 is a binding site for 4-amino-2-methyl-5-(diphosphooxymethyl)pyrimidine. 2-[(2R,5Z)-2-carboxy-4-methylthiazol-5(2H)-ylidene]ethyl phosphate is bound by residues alanine 167 and valine 187–serine 188.

The protein belongs to the thiamine-phosphate synthase family. It depends on Mg(2+) as a cofactor.

The enzyme catalyses 2-[(2R,5Z)-2-carboxy-4-methylthiazol-5(2H)-ylidene]ethyl phosphate + 4-amino-2-methyl-5-(diphosphooxymethyl)pyrimidine + 2 H(+) = thiamine phosphate + CO2 + diphosphate. It carries out the reaction 2-(2-carboxy-4-methylthiazol-5-yl)ethyl phosphate + 4-amino-2-methyl-5-(diphosphooxymethyl)pyrimidine + 2 H(+) = thiamine phosphate + CO2 + diphosphate. The catalysed reaction is 4-methyl-5-(2-phosphooxyethyl)-thiazole + 4-amino-2-methyl-5-(diphosphooxymethyl)pyrimidine + H(+) = thiamine phosphate + diphosphate. It functions in the pathway cofactor biosynthesis; thiamine diphosphate biosynthesis; thiamine phosphate from 4-amino-2-methyl-5-diphosphomethylpyrimidine and 4-methyl-5-(2-phosphoethyl)-thiazole: step 1/1. Its function is as follows. Condenses 4-methyl-5-(beta-hydroxyethyl)thiazole monophosphate (THZ-P) and 2-methyl-4-amino-5-hydroxymethyl pyrimidine pyrophosphate (HMP-PP) to form thiamine monophosphate (TMP). The chain is Thiamine-phosphate synthase from Solidesulfovibrio magneticus (strain ATCC 700980 / DSM 13731 / RS-1) (Desulfovibrio magneticus).